Reading from the N-terminus, the 363-residue chain is Protein U2 (363 aa).

The first 18 residues, 1–18, serve as a signal peptide directing secretion; that stretch reads MFCRSPFLGISSWSLASA.

The chain is Protein U2 (U2) from Homo sapiens (Human).